The sequence spans 291 residues: Light-independent protochlorophyllide reductase iron-sulfur ATP-binding protein (291 aa).

Residues 10 to 15 (GIGKST) and lysine 39 contribute to the ATP site. Serine 14 provides a ligand contact to Mg(2+). [4Fe-4S] cluster contacts are provided by cysteine 95 and cysteine 129. ATP is bound at residue 180–181 (NR).

This sequence belongs to the NifH/BchL/ChlL family. Homodimer. Protochlorophyllide reductase is composed of three subunits; ChlL, ChlN and ChlB. It depends on [4Fe-4S] cluster as a cofactor.

The protein localises to the plastid. It is found in the chloroplast. The catalysed reaction is chlorophyllide a + oxidized 2[4Fe-4S]-[ferredoxin] + 2 ADP + 2 phosphate = protochlorophyllide a + reduced 2[4Fe-4S]-[ferredoxin] + 2 ATP + 2 H2O. It functions in the pathway porphyrin-containing compound metabolism; chlorophyll biosynthesis (light-independent). Component of the dark-operative protochlorophyllide reductase (DPOR) that uses Mg-ATP and reduced ferredoxin to reduce ring D of protochlorophyllide (Pchlide) to form chlorophyllide a (Chlide). This reaction is light-independent. The L component serves as a unique electron donor to the NB-component of the complex, and binds Mg-ATP. The chain is Light-independent protochlorophyllide reductase iron-sulfur ATP-binding protein from Picea abies (Norway spruce).